The chain runs to 639 residues: tRNA uridine 5-carboxymethylaminomethyl modification enzyme MnmG (639 aa).

13 to 18 (GGGHAG) serves as a coordination point for FAD. 274–288 (GPRYCPSIEDKIHRF) contacts NAD(+).

This sequence belongs to the MnmG family. Homodimer. Heterotetramer of two MnmE and two MnmG subunits. FAD is required as a cofactor.

It is found in the cytoplasm. In terms of biological role, NAD-binding protein involved in the addition of a carboxymethylaminomethyl (cmnm) group at the wobble position (U34) of certain tRNAs, forming tRNA-cmnm(5)s(2)U34. This is tRNA uridine 5-carboxymethylaminomethyl modification enzyme MnmG from Polynucleobacter asymbioticus (strain DSM 18221 / CIP 109841 / QLW-P1DMWA-1) (Polynucleobacter necessarius subsp. asymbioticus).